The primary structure comprises 374 residues: DNA replication and repair protein RecF (374 aa).

34 to 41 (GDNGAGKT) is an ATP binding site.

This sequence belongs to the RecF family.

It localises to the cytoplasm. In terms of biological role, the RecF protein is involved in DNA metabolism; it is required for DNA replication and normal SOS inducibility. RecF binds preferentially to single-stranded, linear DNA. It also seems to bind ATP. The chain is DNA replication and repair protein RecF from Rhizobium etli (strain ATCC 51251 / DSM 11541 / JCM 21823 / NBRC 15573 / CFN 42).